We begin with the raw amino-acid sequence, 376 residues long: Erythronate-4-phosphate dehydrogenase (376 aa).

Substrate is bound by residues Ser45 and Thr67. NAD(+) is bound at residue Asp147. Arg209 is an active-site residue. Asp233 contributes to the NAD(+) binding site. Glu238 is a catalytic residue. Residue His255 is the Proton donor of the active site. Gly258 provides a ligand contact to NAD(+). Tyr259 provides a ligand contact to substrate.

The protein belongs to the D-isomer specific 2-hydroxyacid dehydrogenase family. PdxB subfamily. Homodimer.

It is found in the cytoplasm. The catalysed reaction is 4-phospho-D-erythronate + NAD(+) = (R)-3-hydroxy-2-oxo-4-phosphooxybutanoate + NADH + H(+). Its pathway is cofactor biosynthesis; pyridoxine 5'-phosphate biosynthesis; pyridoxine 5'-phosphate from D-erythrose 4-phosphate: step 2/5. Functionally, catalyzes the oxidation of erythronate-4-phosphate to 3-hydroxy-2-oxo-4-phosphonooxybutanoate. This is Erythronate-4-phosphate dehydrogenase from Shewanella baltica (strain OS195).